The sequence spans 123 residues: MPTINQLIASPRVVQKSRKKVPALQQSPQKRGVCTRVYTTTPKKPNSALRKVAKVRLTNGFEVIGYIPGEGHNLQEHSVVMIRGGRVKDLPGVRYHILRGVLDTQGVKNRKQRRSKYGAKRPK.

3-methylthioaspartic acid is present on Asp-89.

This sequence belongs to the universal ribosomal protein uS12 family. Part of the 30S ribosomal subunit. Contacts proteins S8 and S17. May interact with IF1 in the 30S initiation complex.

Its function is as follows. With S4 and S5 plays an important role in translational accuracy. Functionally, interacts with and stabilizes bases of the 16S rRNA that are involved in tRNA selection in the A site and with the mRNA backbone. Located at the interface of the 30S and 50S subunits, it traverses the body of the 30S subunit contacting proteins on the other side and probably holding the rRNA structure together. The combined cluster of proteins S8, S12 and S17 appears to hold together the shoulder and platform of the 30S subunit. This Rhodopseudomonas palustris (strain BisB18) protein is Small ribosomal subunit protein uS12.